The primary structure comprises 204 residues: Cytochrome c biogenesis ATP-binding export protein CcmA (204 aa).

The 203-residue stretch at 2–204 folds into the ABC transporter domain; that stretch reads IEVRDLGVSR…LDAEDLGGFL (203 aa). 34–41 provides a ligand contact to ATP; that stretch reads GPNGIGKT.

Belongs to the ABC transporter superfamily. CcmA exporter (TC 3.A.1.107) family. In terms of assembly, the complex is composed of two ATP-binding proteins (CcmA) and two transmembrane proteins (CcmB).

It is found in the cell inner membrane. The catalysed reaction is heme b(in) + ATP + H2O = heme b(out) + ADP + phosphate + H(+). Functionally, part of the ABC transporter complex CcmAB involved in the biogenesis of c-type cytochromes; once thought to export heme, this seems not to be the case, but its exact role is uncertain. Responsible for energy coupling to the transport system. In Ruegeria sp. (strain TM1040) (Silicibacter sp.), this protein is Cytochrome c biogenesis ATP-binding export protein CcmA.